The following is a 479-amino-acid chain: Trigger factor (479 aa).

A PPIase FKBP-type domain is found at 174–261; the sequence is GDIAVVSFSG…LKELKTRELP (88 aa). The segment at 437 to 479 is disordered; that stretch reads KVLESEAKTSKPAAKSKGSKTKSTKTKTNKAKTEKPASDKTKS. Residues 453–466 are compositionally biased toward basic residues; that stretch reads KGSKTKSTKTKTNK. Residues 467 to 479 show a composition bias toward basic and acidic residues; that stretch reads AKTEKPASDKTKS.

This sequence belongs to the FKBP-type PPIase family. Tig subfamily.

It is found in the cytoplasm. The catalysed reaction is [protein]-peptidylproline (omega=180) = [protein]-peptidylproline (omega=0). In terms of biological role, involved in protein export. Acts as a chaperone by maintaining the newly synthesized protein in an open conformation. Functions as a peptidyl-prolyl cis-trans isomerase. The protein is Trigger factor of Prochlorococcus marinus (strain MIT 9303).